The chain runs to 506 residues: Maturase K (506 aa).

Belongs to the intron maturase 2 family. MatK subfamily.

The protein resides in the plastid. Its subcellular location is the chloroplast. Its function is as follows. Usually encoded in the trnK tRNA gene intron. Probably assists in splicing its own and other chloroplast group II introns. This is Maturase K from Rhododendron tsusiophyllum (Rhododendron).